The primary structure comprises 166 residues: NADH-quinone oxidoreductase subunit E (166 aa).

Residues Cys-92, Cys-97, Cys-133, and Cys-137 each contribute to the [2Fe-2S] cluster site.

The protein belongs to the complex I 24 kDa subunit family. As to quaternary structure, composed of 13 different subunits. Subunits NuoCD, E, F, and G constitute the peripheral sector of the complex. Requires [2Fe-2S] cluster as cofactor.

It catalyses the reaction a quinone + NADH + 5 H(+)(in) = a quinol + NAD(+) + 4 H(+)(out). Functionally, NDH-1 shuttles electrons from NADH, via FMN and iron-sulfur (Fe-S) centers, to quinones in the respiratory chain. The immediate electron acceptor for the enzyme in this species is believed to be ubiquinone. Couples the redox reaction to proton translocation (for every two electrons transferred, four hydrogen ions are translocated across the cytoplasmic membrane), and thus conserves the redox energy in a proton gradient. The chain is NADH-quinone oxidoreductase subunit E (nuoE) from Pseudomonas aeruginosa (strain ATCC 15692 / DSM 22644 / CIP 104116 / JCM 14847 / LMG 12228 / 1C / PRS 101 / PAO1).